A 287-amino-acid polypeptide reads, in one-letter code: ATP synthase gamma chain (287 aa).

The protein belongs to the ATPase gamma chain family. F-type ATPases have 2 components, CF(1) - the catalytic core - and CF(0) - the membrane proton channel. CF(1) has five subunits: alpha(3), beta(3), gamma(1), delta(1), epsilon(1). CF(0) has three main subunits: a, b and c.

It localises to the cell inner membrane. Functionally, produces ATP from ADP in the presence of a proton gradient across the membrane. The gamma chain is believed to be important in regulating ATPase activity and the flow of protons through the CF(0) complex. This chain is ATP synthase gamma chain, found in Colwellia psychrerythraea (strain 34H / ATCC BAA-681) (Vibrio psychroerythus).